Here is a 439-residue protein sequence, read N- to C-terminus: Exodeoxyribonuclease 7 large subunit (439 aa).

Belongs to the XseA family. Heterooligomer composed of large and small subunits.

The protein resides in the cytoplasm. The catalysed reaction is Exonucleolytic cleavage in either 5'- to 3'- or 3'- to 5'-direction to yield nucleoside 5'-phosphates.. In terms of biological role, bidirectionally degrades single-stranded DNA into large acid-insoluble oligonucleotides, which are then degraded further into small acid-soluble oligonucleotides. In Haemophilus influenzae (strain 86-028NP), this protein is Exodeoxyribonuclease 7 large subunit.